The sequence spans 96 residues: Small ribosomal subunit protein bS6 (96 aa).

The protein belongs to the bacterial ribosomal protein bS6 family.

Binds together with bS18 to 16S ribosomal RNA. The chain is Small ribosomal subunit protein bS6 from Streptococcus thermophilus (strain ATCC BAA-491 / LMD-9).